A 316-amino-acid chain; its full sequence is Probable cell division protein WhiA (316 aa).

The H-T-H motif DNA-binding region spans 276 to 309; it reads SLEELGKIAEPQITKDAIAGRIRRLLQLAEKTEK.

The protein belongs to the WhiA family.

Involved in cell division and chromosome segregation. The sequence is that of Probable cell division protein WhiA from Bifidobacterium longum subsp. infantis (strain ATCC 15697 / DSM 20088 / JCM 1222 / NCTC 11817 / S12).